A 332-amino-acid chain; its full sequence is Phosphate acyltransferase (332 aa).

The protein belongs to the PlsX family. Homodimer. Probably interacts with PlsY.

Its subcellular location is the cytoplasm. The catalysed reaction is a fatty acyl-[ACP] + phosphate = an acyl phosphate + holo-[ACP]. It participates in lipid metabolism; phospholipid metabolism. Functionally, catalyzes the reversible formation of acyl-phosphate (acyl-PO(4)) from acyl-[acyl-carrier-protein] (acyl-ACP). This enzyme utilizes acyl-ACP as fatty acyl donor, but not acyl-CoA. The polypeptide is Phosphate acyltransferase (Streptococcus sanguinis (strain SK36)).